The chain runs to 393 residues: Putative cytochrome P450 143 (393 aa).

C342 provides a ligand contact to heme.

This sequence belongs to the cytochrome P450 family. Requires heme as cofactor.

The protein is Putative cytochrome P450 143 (cyp143) of Mycobacterium bovis (strain ATCC BAA-935 / AF2122/97).